Consider the following 213-residue polypeptide: Small ribosomal subunit protein eS1 (213 aa).

The protein belongs to the eukaryotic ribosomal protein eS1 family.

The polypeptide is Small ribosomal subunit protein eS1 (Desulfurococcus amylolyticus (strain DSM 18924 / JCM 16383 / VKM B-2413 / 1221n) (Desulfurococcus kamchatkensis)).